The primary structure comprises 695 residues: Sodium-dependent phosphate transport protein 2B (695 aa).

The disordered stretch occupies residues Met1–Pro44. Residues Met1–Lys90 are Cytoplasmic-facing. A helical membrane pass occupies residues Ile91 to Phe111. The Extracellular portion of the chain corresponds to Val112–Asn136. A helical transmembrane segment spans residues Asn137–Val157. At Gln158–Ala213 the chain is on the cytoplasmic side. The chain crosses the membrane as a helical span at residues Phe214–Leu234. Residues Glu235–Ala363 lie on the Extracellular side of the membrane. N-linked (GlcNAc...) asparagine glycans are attached at residues Asn295, Asn313, Asn321, Asn340, and Asn356. Cys303 and Cys350 are disulfide-bonded. Residues Val364–Val384 form a helical membrane-spanning segment. The Cytoplasmic segment spans residues Lys385–Pro408. Residues Phe409–Ile429 form a helical membrane-spanning segment. The Extracellular portion of the chain corresponds to Val430–Gln486. A helical membrane pass occupies residues Ile487–Phe507. Topologically, residues Thr508 to Arg526 are cytoplasmic. Residues Trp527–Leu547 form a helical membrane-spanning segment. Residues Ser548–Gly551 are Extracellular-facing. A helical membrane pass occupies residues Trp552 to Leu572. Residues Arg573 to Phe695 are Cytoplasmic-facing.

The protein belongs to the SLC34A transporter family. As to expression, highly expressed in the lung, in type II alveolar cells. Moderately expressed in kidney followed by small intestine.

The protein resides in the apical cell membrane. The catalysed reaction is 3 Na(+)(out) + phosphate(out) = 3 Na(+)(in) + phosphate(in). Involved in actively transporting phosphate into cells via Na(+) cotransport. The polypeptide is Sodium-dependent phosphate transport protein 2B (Slc34a2) (Rattus norvegicus (Rat)).